Reading from the N-terminus, the 121-residue chain is Neuromedin-B (121 aa).

The first 24 residues, 1-24, serve as a signal peptide directing secretion; sequence MTRQAGSSWLLRGLLLFALFASGV. Met-56 is modified (methionine amide). A propeptide spanning residues 60–121 is cleaved from the precursor; sequence SLEPPSLSLV…RRLLEPLLQK (62 aa).

Belongs to the bombesin/neuromedin-B/ranatensin family. As to expression, in the hindbrain, expressed in the medulla surrounding the lateral half of the facial nucleus. Also expressed in the olfactory bulb and hippocampus. Detected in a subset of neurons distributed throughout the retrotrapezoid nucleus/parafacial respiratory group (RTN/pFRG). Within the RTN/pFRG, expressed in neuronal subpopulations distinct from those expressing Grp. Expressed in lung.

It is found in the secreted. Its subcellular location is the cell projection. The protein resides in the neuron projection. Functionally, stimulates smooth muscle contraction. Induces sighing by acting directly on the pre-Botzinger complex, a cluster of several thousand neurons in the ventrolateral medulla responsible for inspiration during respiratory activity. Contributes to the induction of sneezing following exposure to chemical irritants or allergens which causes release of NMB by nasal sensory neurons and activation of NMBR-expressing neurons in the sneeze-evoking region of the brainstem. These in turn activate neurons of the caudal ventral respiratory group, giving rise to the sneeze reflex. Contributes to induction of acute itch, possibly through activation of the NMBR receptor on dorsal root ganglion neurons. Increases expression of NMBR and steroidogenic mediators STAR, CYP11A1 and HSD3B1 in Leydig cells, induces secretion of testosterone by Leydig cells and also promotes Leydig cell proliferation. Plays a role in the innate immune response to influenza A virus infection by enhancing interferon alpha expression and reducing expression of IL6. Plays a role in CSF1-induced proliferation of osteoclast precursors by contributing to the positive regulation of the expression of the CSF1 receptor CSF1R. This Mus musculus (Mouse) protein is Neuromedin-B (Nmb).